Here is a 409-residue protein sequence, read N- to C-terminus: Elongation factor Tu, chloroplastic (409 aa).

Residues 10–214 (KPHVNIGTIG…NVDSYIPTPA (205 aa)) enclose the tr-type G domain. Residues 19–26 (GHVDHGKT) are G1. 19–26 (GHVDHGKT) contributes to the GTP binding site. Residue T26 participates in Mg(2+) binding. Residues 60–64 (GITIN) are G2. Residues 81–84 (DCPG) are G3. GTP-binding positions include 81–85 (DCPGH) and 136–139 (NKED). The tract at residues 136-139 (NKED) is G4. A G5 region spans residues 174–176 (SAL).

The protein belongs to the TRAFAC class translation factor GTPase superfamily. Classic translation factor GTPase family. EF-Tu/EF-1A subfamily.

The protein localises to the plastid. Its subcellular location is the chloroplast. The enzyme catalyses GTP + H2O = GDP + phosphate + H(+). In terms of biological role, GTP hydrolase that promotes the GTP-dependent binding of aminoacyl-tRNA to the A-site of ribosomes during protein biosynthesis. The protein is Elongation factor Tu, chloroplastic (tufA) of Ostreococcus tauri.